Consider the following 492-residue polypeptide: Cytoplasmic dynein 1 light intermediate chain 2 (492 aa).

61–68 (GEDGSGKT) serves as a coordination point for ATP. Disordered regions lie at residues 188–207 (EEGC…GSDE), 370–423 (LAKQ…KNNA), and 437–492 (LSKK…ENEA). 3 positions are modified to phosphoserine: serine 194, serine 383, and serine 391. Residues 370-383 (LAKQPATPTRTSES) show a composition bias toward polar residues. An Omega-N-methylarginine modification is found at arginine 397. Polar residues predominate over residues 437–469 (LSKKTGSPGSPSAGGVQSTAKKSGQKTVLSNVQ). Position 441 is a phosphothreonine (threonine 441). A phosphoserine mark is found at serine 443 and serine 446. Basic and acidic residues predominate over residues 471 to 480 (ELDRMTRKPD). A compositionally biased stretch (polar residues) spans 482 to 492 (MVTNSSTENEA).

It belongs to the dynein light intermediate chain family. Homodimer. The cytoplasmic dynein 1 complex consists of two catalytic heavy chains (HCs) and a number of non-catalytic subunits presented by intermediate chains (ICs), light intermediate chains (LICs) and light chains (LCs); the composition seems to vary in respect to the IC, LIC and LC composition. The heavy chain homodimer serves as a scaffold for the probable homodimeric assembly of the respective non-catalytic subunits. The ICs and LICs bind directly to the HC dimer and the LCs assemble on the IC dimer. Interacts with DYNC1H1; DYNC1LI1 and DYNC1LI2 bind mutually exclusive to DYNC1H.

It localises to the cytoplasm. The protein resides in the cytoskeleton. Functionally, acts as one of several non-catalytic accessory components of the cytoplasmic dynein 1 complex that are thought to be involved in linking dynein to cargos and to adapter proteins that regulate dynein function. Cytoplasmic dynein 1 acts as a motor for the intracellular retrograde motility of vesicles and organelles along microtubules. May play a role in binding dynein to membranous organelles or chromosomes. The sequence is that of Cytoplasmic dynein 1 light intermediate chain 2 (Dync1li2) from Mus musculus (Mouse).